A 273-amino-acid chain; its full sequence is MGSVQRQDLVLFSDQSVLPAHFFQDSNSHNLFFITHQSCTQPLWMINALVETHVLGSPSSLNESSSSMLPSSTRSHAVLASFIHEQNYFTNSLNKLKIPSNNYNVLDFLSDFIVNNIHNKPRDKILSDVLAKFSAAIQNNPTDTIVIIEQPELLLSLVSGLTCSELNNKFITPLLRQCKVLIIVSNSDIFNIDEYDASVHSSNLQNFYKSSFIKSMINLNLNPLKTGFAKDVTGSLHVCRGGAPIATSNTSLHVVENEYLYLNEKESTKLFYR.

It belongs to the ELP6 family. As to quaternary structure, component of the elongator complex which consists of ELP1/IKI3, ELP2, ELP3, ELP4, ELP5/IKI1 and ELP6. The elongator complex is composed of two copies of the Elp123 subcomplex (composed of ELP1/IKI3, ELP2 and ELP3) and two copies of the Elp456 subcomplex (composed of ELP4, ELP5/IKI1 and ELP6). The Elp123 subcomplex forms a two-lobed scaffold, which binds the Elp456 subcomplex asymmetrically. In each lobe, ELP2 is tightly sandwiched between ELP1/IKI3 and ELP3. The Elp123 subcomplex binds tRNA through ELP1/IKI3 and ELP3 and can bind 2 tRNAs simultaneously. tRNA-binding by the Elp123 subcomplex induces conformational rearrangements which precisely position the targeted anticodon base in the active site. The Elp456 subcomplex binds tRNA and has ATPase activity.

The protein resides in the cytoplasm. It localises to the nucleus. The protein operates within tRNA modification; 5-methoxycarbonylmethyl-2-thiouridine-tRNA biosynthesis. Functionally, component of the elongator complex which is required for multiple tRNA modifications, including mcm5U (5-methoxycarbonylmethyl uridine), mcm5s2U (5-methoxycarbonylmethyl-2-thiouridine), and ncm5U (5-carbamoylmethyl uridine). The elongator complex catalyzes formation of carboxymethyluridine in the wobble base at position 34 in tRNAs. It functions as a gamma-toxin target (TOT); disruption of the complex confers resistance to Kluyveromyces lactis toxin zymocin (pGKL1 killer toxin). May also be involved in sensitivity to Pichia inositovora toxin. In Saccharomyces cerevisiae (strain ATCC 204508 / S288c) (Baker's yeast), this protein is Elongator complex protein 6 (ELP6).